The primary structure comprises 65 residues: Toxin Cbo5 (65 aa).

The LCN-type CS-alpha/beta domain maps to 2-65; sequence KDGYLVDKTG…QTWPLPNKSC (64 aa). 4 cysteine pairs are disulfide-bonded: cysteine 12–cysteine 65, cysteine 16–cysteine 41, cysteine 25–cysteine 46, and cysteine 29–cysteine 48.

Belongs to the long (4 C-C) scorpion toxin superfamily. Sodium channel inhibitor family. Beta subfamily. Expressed by the venom gland.

It is found in the secreted. A probable toxin that has no activity on the tested sodium channels (when tested at 200 nM) and is not toxic to mice, crickets or sweet water shrimps. It resembles Beta toxins that bind voltage-independently at site-4 of sodium channels and shift the voltage of activation toward more negative potentials, thereby affecting sodium channel activation and promoting spontaneous and repetitive firing. In Centruroides bonito (Scorpion), this protein is Toxin Cbo5.